We begin with the raw amino-acid sequence, 364 residues long: Anionic peroxidase (364 aa).

Positions Met-1–Ala-20 are cleaved as a signal peptide. The propeptide occupies Gly-21–Gly-66. His-99 functions as the Proton acceptor in the catalytic mechanism. 4 residues coordinate Ca(2+): Asp-100, Val-103, Gly-105, and Asp-107. Residues Cys-101 and Cys-106 are joined by a disulfide bond. 4 N-linked (GlcNAc...) asparagine glycosylation sites follow: Asn-113, Asn-188, Asn-202, and Asn-216. 2 cysteine pairs are disulfide-bonded: Cys-155-Cys-343 and Cys-234-Cys-255. His-227 is a binding site for heme b. Thr-228 contacts Ca(2+). N-linked (GlcNAc...) asparagine glycans are attached at residues Asn-254 and Asn-260. Ca(2+) is bound by residues Asp-268, Thr-270, and Asp-275. The N-linked (GlcNAc...) asparagine glycan is linked to Asn-299.

Belongs to the peroxidase family. Classical plant (class III) peroxidase subfamily. The cofactor is Ca(2+). Heme b is required as a cofactor. Highly expressed in suspension cultured cells and calli. Weak expression also found in the stems of intact plants. No expression in leaf, tuberous root and non-tuberous root.

The protein resides in the secreted. The catalysed reaction is 2 a phenolic donor + H2O2 = 2 a phenolic radical donor + 2 H2O. Functionally, removal of H(2)O(2), oxidation of toxic reductants, biosynthesis and degradation of lignin, suberization, auxin catabolism, response to environmental stresses such as wounding, pathogen attack and oxidative stress. These functions might be dependent on each isozyme/isoform in each plant tissue. In terms of biological role, may contribute to protection against cold-induced oxidative stress. The protein is Anionic peroxidase of Ipomoea batatas (Sweet potato).